A 345-amino-acid chain; its full sequence is Tryptophan--tRNA ligase (345 aa).

ATP-binding positions include Q22–S24 and G30–N31. The 'HIGH' region signature appears at P23–N31. Residue D146 participates in L-tryptophan binding. ATP-binding positions include G158–D160, V197, and K206–S210. Positions K206–S210 match the 'KMSKS' region motif.

The protein belongs to the class-I aminoacyl-tRNA synthetase family. In terms of assembly, homodimer.

The protein resides in the cytoplasm. It carries out the reaction tRNA(Trp) + L-tryptophan + ATP = L-tryptophyl-tRNA(Trp) + AMP + diphosphate + H(+). Catalyzes the attachment of tryptophan to tRNA(Trp). This chain is Tryptophan--tRNA ligase, found in Photorhabdus laumondii subsp. laumondii (strain DSM 15139 / CIP 105565 / TT01) (Photorhabdus luminescens subsp. laumondii).